The following is a 338-amino-acid chain: Phenylalanine--tRNA ligase alpha subunit (338 aa).

Residue glutamate 253 coordinates Mg(2+).

This sequence belongs to the class-II aminoacyl-tRNA synthetase family. Phe-tRNA synthetase alpha subunit type 1 subfamily. Tetramer of two alpha and two beta subunits. It depends on Mg(2+) as a cofactor.

It localises to the cytoplasm. It catalyses the reaction tRNA(Phe) + L-phenylalanine + ATP = L-phenylalanyl-tRNA(Phe) + AMP + diphosphate + H(+). This chain is Phenylalanine--tRNA ligase alpha subunit, found in Syntrophotalea carbinolica (strain DSM 2380 / NBRC 103641 / GraBd1) (Pelobacter carbinolicus).